Here is a 490-residue protein sequence, read N- to C-terminus: Cytochrome P450 2C19 (490 aa).

Residue C435 participates in heme binding.

It belongs to the cytochrome P450 family. Requires heme as cofactor.

The protein localises to the endoplasmic reticulum membrane. It localises to the microsome membrane. It carries out the reaction an organic molecule + reduced [NADPH--hemoprotein reductase] + O2 = an alcohol + oxidized [NADPH--hemoprotein reductase] + H2O + H(+). The enzyme catalyses (5Z,8Z,11Z)-eicosatrienoate + reduced [NADPH--hemoprotein reductase] + O2 = 19-hydroxy-(5Z,8Z,11Z)-eicosatrienoate + oxidized [NADPH--hemoprotein reductase] + H2O + H(+). It catalyses the reaction (5Z,8Z,11Z,14Z)-eicosatetraenoate + reduced [NADPH--hemoprotein reductase] + O2 = 19-hydroxy-(5Z,8Z,11Z,14Z)-eicosatetraenoate + oxidized [NADPH--hemoprotein reductase] + H2O + H(+). The catalysed reaction is (5Z,8Z,11Z,14Z,17Z)-eicosapentaenoate + reduced [NADPH--hemoprotein reductase] + O2 = 19-hydroxy-(5Z,8Z,11Z,14Z,17Z)-eicosapentaenoate + oxidized [NADPH--hemoprotein reductase] + H2O + H(+). It carries out the reaction (4Z,7Z,10Z,13Z,16Z,19Z)-docosahexaenoate + reduced [NADPH--hemoprotein reductase] + O2 = 21-hydroxy-(4Z,7Z,10Z,13Z,16Z,19Z)-docosahexaenoate + oxidized [NADPH--hemoprotein reductase] + H2O + H(+). The enzyme catalyses (5Z,8Z,11Z,14Z)-eicosatetraenoate + reduced [NADPH--hemoprotein reductase] + O2 = (8R,9S)-epoxy-(5Z,11Z,14Z)-eicosatrienoate + oxidized [NADPH--hemoprotein reductase] + H2O + H(+). It catalyses the reaction (5Z,8Z,11Z,14Z)-eicosatetraenoate + reduced [NADPH--hemoprotein reductase] + O2 = (11R,12S)-epoxy-(5Z,8Z,14Z)-eicosatrienoate + oxidized [NADPH--hemoprotein reductase] + H2O + H(+). The catalysed reaction is (5Z,8Z,11Z,14Z)-eicosatetraenoate + reduced [NADPH--hemoprotein reductase] + O2 = (11S,12R)-epoxy-(5Z,8Z,14Z)-eicosatrienoate + oxidized [NADPH--hemoprotein reductase] + H2O + H(+). It carries out the reaction (5Z,8Z,11Z,14Z)-eicosatetraenoate + reduced [NADPH--hemoprotein reductase] + O2 = (14R,15S)-epoxy-(5Z,8Z,11Z)-eicosatrienoate + oxidized [NADPH--hemoprotein reductase] + H2O + H(+). The enzyme catalyses (5Z,8Z,11Z,14Z,17Z)-eicosapentaenoate + reduced [NADPH--hemoprotein reductase] + O2 = (17R,18S)-epoxy-(5Z,8Z,11Z,14Z)-eicosatetraenoate + oxidized [NADPH--hemoprotein reductase] + H2O + H(+). It catalyses the reaction (4Z,7Z,10Z,13Z,16Z,19Z)-docosahexaenoate + reduced [NADPH--hemoprotein reductase] + O2 = (19R,20S)-epoxy-(4Z,7Z,10Z,13Z,16Z)-docosapentaenoate + oxidized [NADPH--hemoprotein reductase] + H2O + H(+). The catalysed reaction is (4Z,7Z,10Z,13Z,16Z,19Z)-docosahexaenoate + reduced [NADPH--hemoprotein reductase] + O2 = (19S,20R)-epoxy-(4Z,7Z,10Z,13Z,16Z)-docosapentaenoate + oxidized [NADPH--hemoprotein reductase] + H2O + H(+). It carries out the reaction (4R)-limonene + reduced [NADPH--hemoprotein reductase] + O2 = (1R,5S)-carveol + oxidized [NADPH--hemoprotein reductase] + H2O + H(+). The enzyme catalyses (4S)-limonene + reduced [NADPH--hemoprotein reductase] + O2 = (1S,5R)-carveol + oxidized [NADPH--hemoprotein reductase] + H2O + H(+). It catalyses the reaction (4S)-limonene + reduced [NADPH--hemoprotein reductase] + O2 = (4S)-perillyl alcohol + oxidized [NADPH--hemoprotein reductase] + H2O + H(+). The catalysed reaction is fenbendazole + reduced [NADPH--hemoprotein reductase] + O2 = 4'-hydroxyfenbendazole + oxidized [NADPH--hemoprotein reductase] + H2O + H(+). It functions in the pathway lipid metabolism; fatty acid metabolism. It participates in terpene metabolism; (4R)-limonene degradation. Its function is as follows. A cytochrome P450 monooxygenase involved in the metabolism of polyunsaturated fatty acids (PUFA). Mechanistically, uses molecular oxygen inserting one oxygen atom into a substrate, and reducing the second into a water molecule, with two electrons provided by NADPH via cytochrome P450 reductase (NADPH--hemoprotein reductase). Catalyzes the hydroxylation of carbon-hydrogen bonds. Hydroxylates PUFA specifically at the omega-1 position. Catalyzes the epoxidation of double bonds of PUFA. Also metabolizes plant monoterpenes such as limonene. Oxygenates (R)- and (S)-limonene to produce carveol and perillyl alcohol. Responsible for the metabolism of a number of therapeutic agents such as the anticonvulsant drug S-mephenytoin, omeprazole, proguanil, certain barbiturates, diazepam, propranolol, citalopram and imipramine. Hydroxylates fenbendazole at the 4' position. In Homo sapiens (Human), this protein is Cytochrome P450 2C19 (CYP2C19).